We begin with the raw amino-acid sequence, 98 residues long: Large ribosomal subunit protein bL28 (98 aa).

Belongs to the bacterial ribosomal protein bL28 family.

The polypeptide is Large ribosomal subunit protein bL28 (Phenylobacterium zucineum (strain HLK1)).